The chain runs to 87 residues: Phytosulfokines 1 (87 aa).

Positions 1-24 (MMKTKSEVLIFFFTLVLLLSMASS) are cleaved as a signal peptide. A propeptide spanning residues 25 to 76 (VILREDGFAPPKPSPTTHEKASTKGDRDGVECKNSDSEEECLVKKTVAAHTD) is cleaved from the precursor. Residues 31–59 (GFAPPKPSPTTHEKASTKGDRDGVECKNS) are disordered. Basic and acidic residues predominate over residues 41-59 (THEKASTKGDRDGVECKNS). Residues Tyr77 and Tyr79 each carry the sulfotyrosine modification. Positions 82–87 (DLNLSP) are excised as a propeptide.

Belongs to the phytosulfokine family. Post-translationally, sulfation is important for activity and for the binding to a putative membrane receptor. In terms of processing, PSK-beta is produced from PSK-alpha by exopeptidase digestion. Expressed only in roots.

It is found in the secreted. Its function is as follows. Promotes plant cell differentiation, organogenesis and somatic embryogenesis as well as cell proliferation. The chain is Phytosulfokines 1 (PSK1) from Arabidopsis thaliana (Mouse-ear cress).